The primary structure comprises 366 residues: uncharacterized protein (366 aa).

Helical transmembrane passes span isoleucine 164 to isoleucine 184, isoleucine 188 to leucine 208, valine 223 to leucine 243, phenylalanine 256 to methionine 276, phenylalanine 299 to leucine 319, and phenylalanine 325 to isoleucine 345.

This sequence to A.fulgidus AF2058.

The protein resides in the cell membrane. This is an uncharacterized protein from Methanocaldococcus jannaschii (strain ATCC 43067 / DSM 2661 / JAL-1 / JCM 10045 / NBRC 100440) (Methanococcus jannaschii).